The sequence spans 316 residues: Phosphate acyltransferase (316 aa).

The protein belongs to the PlsX family. As to quaternary structure, homodimer. Probably interacts with PlsY.

It is found in the cytoplasm. It catalyses the reaction a fatty acyl-[ACP] + phosphate = an acyl phosphate + holo-[ACP]. It functions in the pathway lipid metabolism; phospholipid metabolism. Its function is as follows. Catalyzes the reversible formation of acyl-phosphate (acyl-PO(4)) from acyl-[acyl-carrier-protein] (acyl-ACP). This enzyme utilizes acyl-ACP as fatty acyl donor, but not acyl-CoA. This Chlamydia abortus (strain DSM 27085 / S26/3) (Chlamydophila abortus) protein is Phosphate acyltransferase.